A 1255-amino-acid chain; its full sequence is Mucin-1 (1255 aa).

Residues 1-23 form the signal peptide; sequence MTPGTQSPFFLLLLLTVLTVVTG. Residues 23–1033 are disordered; it reads GSGHASSTPG…PLTSSNHSTS (1011 aa). Residues 24-1158 lie on the Extracellular side of the membrane; it reads SGHASSTPGG…SAQSGAGVPG (1135 aa). Over residues 38–54 the composition is skewed to polar residues; the sequence is SATQRSSVPSSTEKNAV. Low complexity predominate over residues 55–75; the sequence is SMTSSVLSSHSPGSGSSTTQG. Residues 61–80 form a 1; approximate repeat; that stretch reads LSSHSPGSGSSTTQGQDVTL. Residues 81–100 form a 2; approximate repeat; sequence APATEPASGSAATWGQDVTS. Residues 90–102 are compositionally biased toward polar residues; it reads SAATWGQDVTSVP. 43 tandem repeats follow at residues 101-120, 121-140, 141-160, 161-180, 181-200, 201-220, 221-240, 241-260, 261-280, 281-300, 301-320, 321-340, 341-360, 361-380, 381-400, 401-420, 421-440, 441-460, 461-480, 481-500, 501-520, 521-540, 541-560, 561-580, 581-600, 601-620, 621-640, 641-660, 661-680, 681-700, 701-720, 721-740, 741-760, 761-780, 781-800, 801-820, 821-840, 841-860, 861-880, 881-900, 901-920, 921-940, and 941-960. The 42 X 20 AA approximate tandem repeats of P-A-P-G-S-T-A-P-P-A-H-G-V-T-S-A-P-D-T-R stretch occupies residues 126 to 965; sequence PAPGSTAPPA…HNVTSASGSA (840 aa). 2 O-linked (GalNAc...) threonine glycosylation sites follow: threonine 131 and threonine 139. The O-linked (GalNAc...) serine glycan is linked to serine 140. Threonine 144 is a glycosylation site (O-linked (GalNAc...) threonine). Asparagine 957 is a glycosylation site (N-linked (GlcNAc...) asparagine). A compositionally biased stretch (low complexity) spans 960 to 970; that stretch reads SASGSASGSAS. The 46; approximate repeat unit spans residues 961-980; sequence ASGSASGSASTLVHNGTSAR. Polar residues-rich tracts occupy residues 971–993 and 1001–1033; these read TLVHNGTSARATTTPASKSTPFS and TPTTLASHSTKTDASSTHHSSVPPLTSSNHSTS. Asparagine 975 carries an N-linked (GlcNAc...) asparagine glycan. Residues 981-1000 form a 47; approximate repeat; the sequence is ATTTPASKSTPFSIPSHHSD. Residues 1001-1020 form a 48; approximate repeat; that stretch reads TPTTLASHSTKTDASSTHHS. Residues asparagine 1029, asparagine 1055, and asparagine 1133 are each glycosylated (N-linked (GlcNAc...) asparagine). The region spanning 1039–1148 is the SEA domain; sequence GVSFFFLSFH…VSVSDVPFPF (110 aa). Residues 1159–1181 traverse the membrane as a helical segment; that stretch reads WGIALLVLVCVLVALAIVYLIAL. Over 1182-1255 the chain is Cytoplasmic; that stretch reads AVCQCRRKNY…PAVAATSANL (74 aa). Residues cysteine 1184 and cysteine 1186 are each lipidated (S-palmitoyl cysteine). An interaction with P53 region spans residues 1192-1228; it reads GQLDIFPARDTYHPMSEYPTYHTHGRYVPPSSTDRSP. At tyrosine 1203 the chain carries Phosphotyrosine; by PDGFR. The Interaction with GRB2 signature appears at 1203-1206; sequence YHPM. Position 1212 is a phosphotyrosine (tyrosine 1212). The tract at residues 1214–1237 is disordered; the sequence is THGRYVPPSSTDRSPYEKVSAGNG. Tyrosine 1218 is modified (phosphotyrosine; by PDGFR). Positions 1223–1230 are required for interaction with GSK3B; that stretch reads STDRSPYE. The residue at position 1224 (threonine 1224) is a Phosphothreonine; by PKC/PRKCD. A Phosphoserine; by GSK3-beta modification is found at serine 1227. Tyrosine 1229 is subject to Phosphotyrosine; by CSK, EGFR and SRC. The short motif at 1229–1232 is the Interaction with SRC and ESR1 element; that stretch reads YEKV. Residues 1233 to 1241 are required for interaction with beta- and gamma-catenins; sequence SAGNGGSSL. At tyrosine 1243 the chain carries Phosphotyrosine. A Required for interaction with AP1S2 motif is present at residues 1243–1246; it reads YTNP.

As to quaternary structure, the alpha subunit forms a tight, non-covalent heterodimeric complex with the proteolytically-released beta-subunit. Interaction, via the tandem repeat region, with domain 1 of ICAM1 is implicated in cell migration and metastases. Isoform 1 binds directly the SH2 domain of GRB2, and forms a MUC1/GRB2/SOS1 complex involved in RAS signaling. The cytoplasmic tail (MUC1CT) interacts with several proteins such as SRC, CTNNB1 and ERBs. Interaction with the SH2 domain of CSK decreases interaction with GSK3B. Interacts with CTNNB1/beta-catenin and JUP/gamma-catenin and promotes cell adhesion. Interaction with JUP/gamma-catenin is induced by heregulin. Binds PRKCD, ERBB2, ERBB3 and ERBB4. Heregulin (HRG) stimulates the interaction with ERBB2 and, to a much lesser extent, the interaction with ERBB3 and ERBB4. Interacts with P53 in response to DNA damage. Interacts with KLF4. Interacts with estrogen receptor alpha/ESR1, through its DNA-binding domain, and stimulates its transcription activity. Binds ADAM17. Isoform ZD forms disulfide-linked oligomers. Highly glycosylated (N- and O-linked carbohydrates and sialic acid). O-glycosylated to a varying degree on serine and threonine residues within each tandem repeat, ranging from mono- to penta-glycosylation. The average density ranges from about 50% in human milk to over 90% in T47D breast cancer cells. Further sialylation occurs during recycling. Membrane-shed glycoproteins from kidney and breast cancer cells have preferentially sialyated core 1 structures, while secreted forms from the same tissues display mainly core 2 structures. The O-glycosylated content is overlapping in both these tissues with terminal fucose and galactose, 2- and 3-linked galactose, 3- and 3,6-linked GalNAc-ol and 4-linked GlcNAc predominating. Differentially O-glycosylated in breast carcinomas with 3,4-linked GlcNAc. N-glycosylation consists of high-mannose, acidic complex-type and hybrid glycans in the secreted form MUC1/SEC, and neutral complex-type in the transmembrane form, MUC1/TM. Post-translationally, proteolytic cleavage in the SEA domain occurs in the endoplasmic reticulum by an autoproteolytic mechanism and requires the full-length SEA domain as well as requiring a Ser, Thr or Cys residue at the P + 1 site. Cleavage at this site also occurs on isoform MUC1/X but not on isoform MUC1/Y. Ectodomain shedding is mediated by ADAM17. In terms of processing, dual palmitoylation on cysteine residues in the CQC motif is required for recycling from endosomes back to the plasma membrane. Phosphorylated on tyrosines and serine residues in the C-terminal. Phosphorylation on tyrosines in the C-terminal increases the nuclear location of MUC1 and beta-catenin. Phosphorylation by PKC delta induces binding of MUC1 to beta-catenin/CTNNB1 and thus decreases the formation of the beta-catenin/E-cadherin complex. Src-mediated phosphorylation inhibits interaction with GSK3B. Src- and EGFR-mediated phosphorylation on Tyr-1229 increases binding to beta-catenin/CTNNB1. GSK3B-mediated phosphorylation on Ser-1227 decreases this interaction but restores the formation of the beta-cadherin/E-cadherin complex. On T-cell receptor activation, phosphorylated by LCK. PDGFR-mediated phosphorylation increases nuclear colocalization of MUC1CT and CTNNB1. Post-translationally, the N-terminal sequence has been shown to begin at position 24 or 28. Expressed on the apical surface of epithelial cells, especially of airway passages, breast and uterus. Also expressed in activated and unactivated T-cells. Overexpressed in epithelial tumors, such as breast or ovarian cancer and also in non-epithelial tumor cells. Isoform Y is expressed in tumor cells only.

The protein resides in the apical cell membrane. The protein localises to the secreted. It is found in the cell membrane. It localises to the cytoplasm. Its subcellular location is the nucleus. Its function is as follows. The alpha subunit has cell adhesive properties. Can act both as an adhesion and an anti-adhesion protein. May provide a protective layer on epithelial cells against bacterial and enzyme attack. In terms of biological role, the beta subunit contains a C-terminal domain which is involved in cell signaling, through phosphorylations and protein-protein interactions. Modulates signaling in ERK, SRC and NF-kappa-B pathways. In activated T-cells, influences directly or indirectly the Ras/MAPK pathway. Promotes tumor progression. Regulates TP53-mediated transcription and determines cell fate in the genotoxic stress response. Binds, together with KLF4, the PE21 promoter element of TP53 and represses TP53 activity. The protein is Mucin-1 (MUC1) of Homo sapiens (Human).